Consider the following 274-residue polypeptide: Large ribosomal subunit protein uL2cz/uL2cy (274 aa).

2 disordered regions span residues 1 to 23 and 223 to 274; these read MAIHLYKTSTPSTRNGTVGSQVK and MNPV…RRSK. Over residues 7–23 the composition is skewed to polar residues; that stretch reads KTSTPSTRNGTVGSQVK.

The protein belongs to the universal ribosomal protein uL2 family. As to quaternary structure, part of the 50S ribosomal subunit.

Its subcellular location is the plastid. It is found in the chloroplast. In Nandina domestica (Heavenly bamboo), this protein is Large ribosomal subunit protein uL2cz/uL2cy (rpl2-A).